The sequence spans 116 residues: L-amino-acid oxidase BjussuLAAO-II (116 aa).

Residue 42-45 (GPMR) participates in FAD binding. Residues R45 and H78 each coordinate substrate.

It belongs to the flavin monoamine oxidase family. FIG1 subfamily. Homodimer; non-covalently linked. The cofactor is FAD. Glycosylated. Expressed by the venom gland.

It is found in the secreted. The enzyme catalyses an L-alpha-amino acid + O2 + H2O = a 2-oxocarboxylate + H2O2 + NH4(+). The catalysed reaction is L-leucine + O2 + H2O = 4-methyl-2-oxopentanoate + H2O2 + NH4(+). It carries out the reaction L-phenylalanine + O2 + H2O = 3-phenylpyruvate + H2O2 + NH4(+). It catalyses the reaction L-methionine + O2 + H2O = 4-methylsulfanyl-2-oxobutanoate + H2O2 + NH4(+). The enzyme catalyses L-isoleucine + O2 + H2O = (S)-3-methyl-2-oxopentanoate + H2O2 + NH4(+). The catalysed reaction is L-histidine + O2 + H2O = 3-(imidazol-5-yl)pyruvate + H2O2 + NH4(+). It carries out the reaction L-tyrosine + O2 + H2O = 3-(4-hydroxyphenyl)pyruvate + H2O2 + NH4(+). It catalyses the reaction L-tryptophan + O2 + H2O = indole-3-pyruvate + H2O2 + NH4(+). Its enzymatic activities is reduced by the presence of Zn(2+), Al(3+), Cu(2+), Na(+) or Ni(2+) salts. Catalyzes an oxidative deamination of predominantly hydrophobic and aromatic L-amino acids, thus producing hydrogen peroxide that may contribute to the diverse toxic effects of this enzyme. Shows very high enzymatic activity on L-Met and L-Leu, high activity on L-Ile, L-Phe and L-Tyr and moderate activity on L-His. Exhibits diverse biological activities, such as hemorrhage, hemolysis, edema, apoptosis of vascular endothelial cells or tumor cell lines, and antibacterial, as well as regulation of platelet aggregation. Effects of snake L-amino oxidases on platelets are controversial, since they either induce aggregation or inhibit agonist-induced aggregation. These different effects are probably due to different experimental conditions. In vitro, has a strong antiprotozoal effect against Leishmania amazonensis (IC(50)=4.56 ug/mL) and Trypanosoma cruzi (IC(50)=4.85 ug/mL). It also causes cell death and DNA damage in hepatocarcinoma cells (HepG2) in vitro by inducing oxidative stress. It exerts cytotoxicity towards colorectal adenocarcinomahuman cells (Caco-2) by acting on multiple intracellular targets. It diminishes cell viability by decreasing mitochondrial activity, the activity of acid phosphatases, and lysosomal function. In addition, it increases intracellular levels of reactive oxygen species and DNA damage, it elevates the expression of the pro-inflammatory cytokine genes TNF and IL6, and lowers the expression of the apoptotic-related genes. Also induces cytotoxicity (IC(50)=1.80 ug/mL) and apoptosis in MCF-7 cells (a human breast adeno-carcinoma cell line) by activating the intrinsic and extrinsic apoptosis pathways, but are not cytotoxic towards MCF-10A cells (a non-tumorigenic human breast epithelial cell line). The polypeptide is L-amino-acid oxidase BjussuLAAO-II (Bothrops jararacussu (Jararacussu)).